We begin with the raw amino-acid sequence, 208 residues long: NAD(P)H-quinone oxidoreductase subunit I (208 aa).

4Fe-4S ferredoxin-type domains follow at residues 55–84 and 95–124; these read GRIH…VDWV and RNYS…MTEE. Residues C64, C67, C70, C74, C104, C107, C110, and C114 each coordinate [4Fe-4S] cluster.

Belongs to the complex I 23 kDa subunit family. In terms of assembly, NDH-1 is composed of at least 11 different subunits. Requires [4Fe-4S] cluster as cofactor.

It is found in the cellular thylakoid membrane. It carries out the reaction a plastoquinone + NADH + (n+1) H(+)(in) = a plastoquinol + NAD(+) + n H(+)(out). It catalyses the reaction a plastoquinone + NADPH + (n+1) H(+)(in) = a plastoquinol + NADP(+) + n H(+)(out). NDH-1 shuttles electrons from an unknown electron donor, via FMN and iron-sulfur (Fe-S) centers, to quinones in the respiratory and/or the photosynthetic chain. The immediate electron acceptor for the enzyme in this species is believed to be plastoquinone. Couples the redox reaction to proton translocation, and thus conserves the redox energy in a proton gradient. The protein is NAD(P)H-quinone oxidoreductase subunit I of Prochlorococcus marinus (strain MIT 9301).